The primary structure comprises 131 residues: Small ribosomal subunit protein uS8 (131 aa).

Belongs to the universal ribosomal protein uS8 family. Part of the 30S ribosomal subunit. Contacts proteins S5 and S12.

In terms of biological role, one of the primary rRNA binding proteins, it binds directly to 16S rRNA central domain where it helps coordinate assembly of the platform of the 30S subunit. In Blochmanniella pennsylvanica (strain BPEN), this protein is Small ribosomal subunit protein uS8.